A 635-amino-acid polypeptide reads, in one-letter code: Membrane protein insertase YidC (635 aa).

Residues 8–28 (LILAMVLSALVMLVWSIFFAP) traverse the membrane as a helical segment. The tract at residues 33-61 (PAQDTPAASTQGTAQPEAGGPATPGAVPQ) is disordered. Transmembrane regions (helical) follow at residues 396–416 (MIGN…LLVF), 470–490 (LPVL…FVTI), 528–548 (SFLH…SMWM), and 564–584 (IFAW…SGLV). The interval 615 to 635 (IRSSLPSRAKAGDKGGDKGGK) is disordered. Basic and acidic residues predominate over residues 624–635 (KAGDKGGDKGGK).

This sequence belongs to the OXA1/ALB3/YidC family. Type 1 subfamily. Interacts with the Sec translocase complex via SecD. Specifically interacts with transmembrane segments of nascent integral membrane proteins during membrane integration.

Its subcellular location is the cell inner membrane. Required for the insertion and/or proper folding and/or complex formation of integral membrane proteins into the membrane. Involved in integration of membrane proteins that insert both dependently and independently of the Sec translocase complex, as well as at least some lipoproteins. Aids folding of multispanning membrane proteins. This Paracoccus denitrificans (strain Pd 1222) protein is Membrane protein insertase YidC.